We begin with the raw amino-acid sequence, 217 residues long: Mucosal pentraxin (217 aa).

Positions 1 to 19 (MEKLLLGVLLLAFLPEGMT) are cleaved as a signal peptide. The Pentraxin (PTX) domain occupies 24–217 (RGKVFIFPEQ…KGYVVVKPKL (194 aa)). Residues Cys-55 and Cys-114 are joined by a disulfide bond. Residues Asp-77, Asn-78, Glu-155, Gln-156, Asp-157, and Gln-167 each contribute to the Ca(2+) site.

This sequence belongs to the pentraxin family. Homopentamer. Pentraxin (or pentaxin) have a discoid arrangement of 5 non-covalently bound subunits. Ca(2+) is required as a cofactor.

The protein resides in the secreted. This is Mucosal pentraxin (MPTX) from Bos taurus (Bovine).